Here is a 151-residue protein sequence, read N- to C-terminus: Sperm surface protein Sp17 (151 aa).

2 disordered regions span residues 56 to 115 and 127 to 151; these read DPAE…EKEE and GHIA…EENK. Residues 62-98 are compositionally biased toward basic and acidic residues; sequence SKVEDRFYNNHAFEEQEPPEKSDPKQEESQISGKEEE. Residues 114–143 enclose the IQ domain; sequence EEVAAVKIQAAFRGHIAREEAKKMKTNSLQ.

As to quaternary structure, homodimer. May interact with ROPN1. Testis and sperm specific.

Its subcellular location is the membrane. Sperm surface zona pellucida binding protein. Helps to bind spermatozoa to the zona pellucida with high affinity. Might function in binding zona pellucida and carbohydrates. The protein is Sperm surface protein Sp17 (SPA17) of Homo sapiens (Human).